The sequence spans 148 residues: UPF0260 protein PM0539 (148 aa).

This sequence belongs to the UPF0260 family.

The protein is UPF0260 protein PM0539 of Pasteurella multocida (strain Pm70).